Consider the following 383-residue polypeptide: uncharacterized protein (383 aa).

Helical transmembrane passes span 49-69 (VDLL…GCVA) and 347-367 (LLGG…PVAG).

To M.tuberculosis Rv0874c.

The protein localises to the cell membrane. This is an uncharacterized protein from Mycobacterium tuberculosis (strain CDC 1551 / Oshkosh).